Reading from the N-terminus, the 302-residue chain is Mitochondrial glycine transporter (302 aa).

3 Solcar repeats span residues 22–112 (HPVF…LKHH), 119–203 (PKPL…AKKL), and 213–297 (FSPV…MMEK). Helical transmembrane passes span 28–53 (FVCG…TRIQ), 87–113 (GVSP…KHHF), 125–150 (VMLG…TRYE), 178–201 (GLTA…TRAK), 217–243 (LNFS…KTHM), and 272–290 (GGVP…AWTV).

The protein belongs to the mitochondrial carrier (TC 2.A.29) family. SLC25A38 subfamily.

The protein localises to the mitochondrion inner membrane. The enzyme catalyses glycine(in) = glycine(out). Its function is as follows. Mitochondrial glycine transporter that imports glycine into the mitochondrial matrix. Plays an important role in providing glycine for the first enzymatic step in heme biosynthesis, the condensation of glycine with succinyl-CoA to produce 5-aminolevulinate (ALA) in the mitochondrial matrix. Required during erythropoiesis. In terms of biological role, may play a role as pro-apoptotic protein that induces caspase-dependent apoptosis. This Xenopus laevis (African clawed frog) protein is Mitochondrial glycine transporter.